A 140-amino-acid polypeptide reads, in one-letter code: uncharacterized protein (140 aa).

An N-terminal signal peptide occupies residues 1 to 22; that stretch reads MRLRWQTIVLLLLILGGASASA.

This is an uncharacterized protein from Archaeoglobus fulgidus (strain ATCC 49558 / DSM 4304 / JCM 9628 / NBRC 100126 / VC-16).